The sequence spans 128 residues: Kinase-associated lipoprotein B (128 aa).

Residues Met-1–Ala-25 form the signal peptide. Cys-26 carries the N-palmitoyl cysteine lipid modification. Residue Cys-26 is the site of S-diacylglycerol cysteine attachment.

It is found in the cell membrane. In terms of biological role, may play a role in the activation or the expression of KinB. The chain is Kinase-associated lipoprotein B (kapB) from Bacillus subtilis (strain 168).